Consider the following 172-residue polypeptide: B-box zinc finger protein 18 (172 aa).

Cys-5, Cys-8, Cys-28, His-33, Cys-56, Cys-59, Cys-79, and His-84 together coordinate Zn(2+). The B box-type 1; atypical zinc-finger motif lies at 5-47; it reads CDACESAAAIVFCAADEAALCCSCDEKVHKCNKLASRHLRVGL. The B box-type 2; atypical zinc-finger motif lies at 56 to 96; it reads CDICENAPAFFYCEIDGSSLCLQCDMVVHVGGKRTHRRFLL. Residues 119–172 form a disordered region; the sequence is QKASSGRGQESNGNGDHDHNMIDLNSNPQRVHEPGSHNQEEGIDVNNANNHEHE. A compositionally biased stretch (polar residues) spans 120–132; sequence KASSGRGQESNGN. A compositionally biased stretch (basic and acidic residues) spans 148 to 158; sequence RVHEPGSHNQE.

Expressed in vasculature of leaves and petioles.

It is found in the nucleus. Its function is as follows. Acts as a negative regulator of seedling photomorphogenesis. Acts as a negative regulator of blue light-mediated inhibition of hypocotyl elongation through increase of bioactive gibberellin levels. Acts as a repressor of thermotolerance by modulating expression of a set of heat shock-responsive genes. This Arabidopsis thaliana (Mouse-ear cress) protein is B-box zinc finger protein 18.